A 352-amino-acid polypeptide reads, in one-letter code: Glutamine synthetase (352 aa).

In terms of domain architecture, GS beta-grasp spans 3-82 (YQAEYIWIDG…LCEVQLTDFT (80 aa)). A GS catalytic domain is found at 87-352 (TRAAALGVAE…TTPAPAEASV (266 aa)). Mg(2+) contacts are provided by glutamate 108 and glutamate 110. Glutamate 164 is an ATP binding site. Mg(2+) contacts are provided by glutamate 169 and glutamate 176. Glutamate 272 contacts L-glutamate.

It belongs to the glutamine synthetase family. In terms of assembly, homooctamer and homotetramer. Mg(2+) is required as a cofactor.

The protein resides in the cytoplasm. The enzyme catalyses L-glutamate + NH4(+) + ATP = L-glutamine + ADP + phosphate + H(+). Catalyzes the ATP-dependent biosynthesis of glutamine from glutamate and ammonia. The polypeptide is Glutamine synthetase (Frankia alni).